The sequence spans 478 residues: PRAME family member 4 (478 aa).

The stretch at 99 to 126 is one LRR 1; degenerate repeat; sequence RWKLQVLDLQDVCENFWMVWSEAMAHGC. The stretch at 181–205 is one LRR 2; degenerate repeat; the sequence is HLCCKKLKILGMPFRNIRSILKMVN. An LRR 3; degenerate repeat occupies 206 to 232; the sequence is LDCIQEVEVNCKWVLPILTQFTPYLGH. One copy of the LRR 4; degenerate repeat lies at 233-268; sequence MRNLQKLILSHMDVSRYVSPEQKKEIVTQFTTQFLK. LRR repeat units follow at residues 269-294, 295-326, 327-347, 351-378, and 379-403; these read LRCL…LSCL, KTSL…SQLK, TLDL…QILL, AATL…ALSR, and CFEL…LLSH.

It belongs to the PRAME family.

The chain is PRAME family member 4 from Homo sapiens (Human).